A 1112-amino-acid polypeptide reads, in one-letter code: Rho GTPase-activating protein 7 (1112 aa).

The SAM domain maps to 37–104 (LAEIEAKEAC…LNKCAVMKLE (68 aa)). A phosphoserine mark is found at S112, S115, and S155. Disordered stretches follow at residues 146-203 (SPKQ…APAR), 318-350 (RSISSSTQTSSSSSQSETSSNVSTPSPVTRTRS), 405-459 (PKAL…VSSR), and 512-574 (SDEG…GVGA). The segment covering 183–193 (VHSTGSLTTHA) has biased composition (polar residues). Positions 296–468 (QLNCVEISAL…RLSIYDNVPG (173 aa)) are focal adhesion-targeting (FAT). Low complexity-rich tracts occupy residues 320–348 (ISSSTQTSSSSSQSETSSNVSTPSPVTRT) and 409–423 (SNGSFSPSGNNSSVN). S343 is modified (phosphoserine). Basic and acidic residues predominate over residues 437–446 (LRRENSSPKE). The segment covering 520-532 (ALDSVSPCPSSPK) has biased composition (polar residues). Residues 534-544 (IHLDVDNDRAT) show a composition bias toward basic and acidic residues. Positions 547-556 (DLDSTGNSLN) are enriched in polar residues. Positions 635–657 (KHGFSWAVPKFMKRIKVPDYKDR) are polybasic cluster (PBR). Residues 662-868 (VPLTVNVQRT…HMIAECKKLF (207 aa)) enclose the Rho-GAP domain. Positions 898 to 1105 (CNDDSADYQH…RDSFSHQNTE (208 aa)) constitute an START domain.

Interacts with EF1A1, facilitates EF1A1 distribution to the membrane periphery and ruffles upon growth factor stimulation and suppresses cell migration. Interacts with tensin TNS1 (via N-terminus); the interaction is decreased by phosphorylation of TNS1. Interacts with TNS3 and PTEN; in resting cells, interacts with TNS3 (via C2 tensin-type domain) but, following growth factor stimulation, TNS3 and PTEN are phosphorylated which leads to weakened interaction with TNS3 and enhanced interaction with PTEN. Interacts (via C-terminus) with tensin TNS4 (via SH2 domain); the interaction is independent of tyrosine phosphorylation of DLC1.

It is found in the cytoplasm. The protein localises to the cell junction. It localises to the focal adhesion. Its subcellular location is the membrane. In terms of biological role, functions as a GTPase-activating protein for the small GTPases RHOA, RHOB, RHOC and CDC42, terminating their downstream signaling. This induces morphological changes and detachment through cytoskeletal reorganization, playing a critical role in biological processes such as cell migration and proliferation. Also functions in vivo as an activator of the phospholipase PLCD1. Active DLC1 increases cell migration velocity but reduces directionality. Required for growth factor-induced epithelial cell migration; in resting cells, interacts with TNS3 while PTEN interacts with the p85 regulatory subunit of the PI3K kinase complex but growth factor stimulation induces phosphorylation of TNS3 and PTEN, causing them to change their binding preference so that PTEN interacts with DLC1 and TNS3 interacts with p85. The PTEN-DLC1 complex translocates to the posterior of migrating cells to activate RHOA while the TNS3-p85 complex translocates to the leading edge of migrating cells to promote RAC1 activation. The chain is Rho GTPase-activating protein 7 (DLC1) from Bos taurus (Bovine).